Consider the following 233-residue polypeptide: Antilisterial bacteriocin subtilosin biosynthesis protein AlbG (233 aa).

Helical transmembrane passes span 4-24, 46-66, 116-136, 145-165, and 192-212; these read STVF…FGWV, GLLA…LHYV, TYVM…FEIV, TPPI…LFYM, and IGWM…LAAI.

The protein localises to the cell membrane. Involved in the production of the bacteriocin subtilosin. This is Antilisterial bacteriocin subtilosin biosynthesis protein AlbG (albG) from Bacillus subtilis.